Consider the following 224-residue polypeptide: 7-cyano-7-deazaguanine synthase (224 aa).

12 to 22 contacts ATP; the sequence is LSGGLDSSTVT. Zn(2+)-binding residues include C193, C201, C204, and C207.

It belongs to the QueC family. Requires Zn(2+) as cofactor.

The enzyme catalyses 7-carboxy-7-deazaguanine + NH4(+) + ATP = 7-cyano-7-deazaguanine + ADP + phosphate + H2O + H(+). The protein operates within purine metabolism; 7-cyano-7-deazaguanine biosynthesis. Catalyzes the ATP-dependent conversion of 7-carboxy-7-deazaguanine (CDG) to 7-cyano-7-deazaguanine (preQ(0)). The polypeptide is 7-cyano-7-deazaguanine synthase (Prochlorococcus marinus (strain MIT 9515)).